The chain runs to 96 residues: MKIQPLGDRLVVKVAEVAAEKTKSGLYVPDTAKEKPQEGEVLAVGPGAFNDKGERMPMDVAVGDKIIFSKYGGTEIKIDGEEYLVMSQRDILAKIN.

This sequence belongs to the GroES chaperonin family. Heptamer of 7 subunits arranged in a ring. Interacts with the chaperonin GroEL.

Its subcellular location is the cytoplasm. In terms of biological role, together with the chaperonin GroEL, plays an essential role in assisting protein folding. The GroEL-GroES system forms a nano-cage that allows encapsulation of the non-native substrate proteins and provides a physical environment optimized to promote and accelerate protein folding. GroES binds to the apical surface of the GroEL ring, thereby capping the opening of the GroEL channel. The chain is Co-chaperonin GroES from Syntrophomonas wolfei subsp. wolfei (strain DSM 2245B / Goettingen).